Reading from the N-terminus, the 433-residue chain is Transcobalamin-1 (433 aa).

The signal sequence occupies residues 1 to 23; sequence MRQSHQLPLVGLLLFSFIPSQLC. The interval 24–310 is globular N-terminal alpha domain; the sequence is EICEVSEENY…DINKDSSCVS (287 aa). Cystine bridges form between Cys-26/Cys-265, Cys-105/Cys-308, and Cys-155/Cys-197. 142–146 contributes to the cyanocob(III)alamin binding site; it reads TNYYQ. An N-linked (GlcNAc...) asparagine glycan is attached at Asn-160. A cyanocob(III)alamin-binding site is contributed by Asp-186. Asn-216 is a glycosylation site (N-linked (GlcNAc...) asparagine). Asn-240 and Gln-289 together coordinate cyanocob(III)alamin. A flexible linker region spans residues 311–332; the sequence is ASGNFNISADEPITVTPPDSQS. 6 N-linked (GlcNAc...) asparagine glycosylation sites follow: Asn-316, Asn-337, Asn-343, Asn-349, Asn-354, and Asn-369. A globular C-terminal beta domain region spans residues 333-433; it reads YISVNYSVRI…ENLEVRWSKY (101 aa). Position 385–386 (385–386) interacts with cyanocob(III)alamin; sequence YI. A disulfide bridge links Cys-388 with Cys-393. Cyanocob(III)alamin-binding positions include 402–404, Leu-411, and Tyr-433; that span reads WEL.

This sequence belongs to the eukaryotic cobalamin transport proteins family. Contains about 30% carbohydrates. In terms of tissue distribution, produced by the salivary glands of the oral cavity, in response to ingestion of food. Major constituent of secondary granules in neutrophils.

The protein resides in the secreted. Binds vitamin B12 with femtomolar affinity and protects it from the acidic environment of the stomach. The polypeptide is Transcobalamin-1 (TCN1) (Homo sapiens (Human)).